Here is a 267-residue protein sequence, read N- to C-terminus: Hydroxyethylthiazole kinase 2 (267 aa).

Position 41 (M41) interacts with substrate. ATP-binding residues include K116 and T166. A substrate-binding site is contributed by G193.

This sequence belongs to the Thz kinase family. Mg(2+) serves as cofactor.

The enzyme catalyses 5-(2-hydroxyethyl)-4-methylthiazole + ATP = 4-methyl-5-(2-phosphooxyethyl)-thiazole + ADP + H(+). The protein operates within cofactor biosynthesis; thiamine diphosphate biosynthesis; 4-methyl-5-(2-phosphoethyl)-thiazole from 5-(2-hydroxyethyl)-4-methylthiazole: step 1/1. Its function is as follows. Catalyzes the phosphorylation of the hydroxyl group of 4-methyl-5-beta-hydroxyethylthiazole (THZ). This is Hydroxyethylthiazole kinase 2 from Streptococcus pneumoniae serotype 4 (strain ATCC BAA-334 / TIGR4).